Reading from the N-terminus, the 131-residue chain is Thrombocorticin (131 aa).

Cys-3 and Cys-111 are joined by a disulfide. Residues Arg-28 to Met-60 are disordered. Residues Ser-37–Thr-54 are compositionally biased toward low complexity. The Pseudodomain-swapping motif signature appears at Asp-117–Gly-131.

Functionally, binds to fucose and mannose in a calcium-dependent manner (in vitro). Acts as an agonist for human thrombopoietin receptor MPL (in vitro). Binding of sugar-moieties may promote the interaction with human MPL on the cell surface (in vitro). Catalyzes MPL dimerization and activation, and modulates internalization of the receptor (in vitro). Exhibits proliferation activity in murine recombinant Ba/F3 cells expressing human MPL (Ba/F3-huMPL) (in vitro). Induces phosphorylation of STAT5 in recombinant Ba/F3-huMPL cells, possibly by stimulating MPL on the cell surface to transduce signals via Jak/STAT signaling pathway (in vitro). Does not aggregate rabbit erythrocytes, indicating absent lectin-like agglutination activity (in vitro). The protein is Thrombocorticin of Corticium sp. (Marine sponge).